Consider the following 120-residue polypeptide: Large ribosomal subunit protein eL8 (120 aa).

It belongs to the eukaryotic ribosomal protein eL8 family. Part of the 50S ribosomal subunit. Probably part of the RNase P complex.

The protein localises to the cytoplasm. Its function is as follows. Multifunctional RNA-binding protein that recognizes the K-turn motif in ribosomal RNA, the RNA component of RNase P, box H/ACA, box C/D and box C'/D' sRNAs. This chain is Large ribosomal subunit protein eL8, found in Natronomonas pharaonis (strain ATCC 35678 / DSM 2160 / CIP 103997 / JCM 8858 / NBRC 14720 / NCIMB 2260 / Gabara) (Halobacterium pharaonis).